The following is a 149-amino-acid chain: MFGLKVKNAEADTAKSNEKLQGAEATGSSTTSGSGQSTQRGGSSGDTKVKALQVAVKKKSGSQGNSGDQGTEQVELESNDLANAPIKRGSNPASPTQGSRLRHHPIQFGIWSIRHPHPLKAVACDRANSQGPPQMIRLDPHSVRCALCL.

The tract at residues 1-103 (MFGLKVKNAE…SPTQGSRLRH (103 aa)) is disordered. Basic and acidic residues predominate over residues 7-18 (KNAEADTAKSNE). The segment covering 26-41 (TGSSTTSGSGQSTQRG) has biased composition (low complexity). A compositionally biased stretch (polar residues) spans 61–72 (GSQGNSGDQGTE).

This sequence belongs to the adhesin P1 family.

This is an uncharacterized protein from Mycoplasma pneumoniae (strain ATCC 29342 / M129 / Subtype 1) (Mycoplasmoides pneumoniae).